The primary structure comprises 61 residues: Small ribosomal subunit protein uS14 (61 aa).

Positions 24, 27, 40, and 43 each coordinate Zn(2+).

This sequence belongs to the universal ribosomal protein uS14 family. Zinc-binding uS14 subfamily. As to quaternary structure, part of the 30S ribosomal subunit. Contacts proteins S3 and S10. The cofactor is Zn(2+).

Binds 16S rRNA, required for the assembly of 30S particles and may also be responsible for determining the conformation of the 16S rRNA at the A site. In Campylobacter concisus (strain 13826), this protein is Small ribosomal subunit protein uS14.